A 276-amino-acid polypeptide reads, in one-letter code: Imidazole glycerol phosphate synthase subunit HisF (276 aa).

Catalysis depends on residues Asp11 and Asp130.

This sequence belongs to the HisA/HisF family. In terms of assembly, heterodimer of HisH and HisF.

It is found in the cytoplasm. It catalyses the reaction 5-[(5-phospho-1-deoxy-D-ribulos-1-ylimino)methylamino]-1-(5-phospho-beta-D-ribosyl)imidazole-4-carboxamide + L-glutamine = D-erythro-1-(imidazol-4-yl)glycerol 3-phosphate + 5-amino-1-(5-phospho-beta-D-ribosyl)imidazole-4-carboxamide + L-glutamate + H(+). The protein operates within amino-acid biosynthesis; L-histidine biosynthesis; L-histidine from 5-phospho-alpha-D-ribose 1-diphosphate: step 5/9. Its function is as follows. IGPS catalyzes the conversion of PRFAR and glutamine to IGP, AICAR and glutamate. The HisF subunit catalyzes the cyclization activity that produces IGP and AICAR from PRFAR using the ammonia provided by the HisH subunit. The sequence is that of Imidazole glycerol phosphate synthase subunit HisF from Beijerinckia indica subsp. indica (strain ATCC 9039 / DSM 1715 / NCIMB 8712).